The primary structure comprises 341 residues: Putative methyltransferase YGR283C (341 aa).

The protein belongs to the class IV-like SAM-binding methyltransferase superfamily.

The protein resides in the nucleus. Its subcellular location is the nucleolus. The protein is Putative methyltransferase YGR283C of Saccharomyces cerevisiae (strain ATCC 204508 / S288c) (Baker's yeast).